The primary structure comprises 831 residues: Glycerol-3-phosphate acyltransferase (831 aa).

The short motif at 304–309 (CHRSHM) is the HXXXXD motif element. Residues 801-831 (VSMPAETSNQPEAPETPETPETPEPEGKTES) are disordered.

Belongs to the GPAT/DAPAT family.

The protein localises to the cell inner membrane. It catalyses the reaction sn-glycerol 3-phosphate + an acyl-CoA = a 1-acyl-sn-glycero-3-phosphate + CoA. It participates in phospholipid metabolism; CDP-diacylglycerol biosynthesis; CDP-diacylglycerol from sn-glycerol 3-phosphate: step 1/3. The chain is Glycerol-3-phosphate acyltransferase from Yersinia pseudotuberculosis serotype IB (strain PB1/+).